The sequence spans 559 residues: 5'-AMP-activated protein kinase catalytic subunit alpha-1 (559 aa).

The Protein kinase domain occupies 27-279 (YILGDTLGVG…IKDIREHEWF (253 aa)). Phosphothreonine is present on T32. Residues 33–41 (LGVGTFGKV) and K56 each bind ATP. Catalysis depends on D150, which acts as the Proton acceptor. A Phosphothreonine; by LKB1 and CaMKK2 modification is found at T183. T269 and T355 each carry phosphothreonine. The segment at 302 to 381 (EALKEVCEKF…PERVPFLVAE (80 aa)) is AIS. Residue S356 is modified to Phosphoserine. A Phosphoserine; by ULK1 modification is found at S360. The residue at position 368 (T368) is a Phosphothreonine; by ULK1. The residue at position 382 (T382) is a Phosphothreonine. S397 carries the phosphoserine; by ULK1 modification. Residues S467 and S486 each carry the phosphoserine modification. The tract at residues 484–536 (AKSGTATPQRSGSISNYRSCQRSDSDAEAQGKPSEVSLTSSVTSLDSSPVDVA) is disordered. Over residues 485 to 505 (KSGTATPQRSGSISNYRSCQR) the composition is skewed to polar residues. A Phosphoserine; by ULK1 modification is found at S486. Phosphothreonine; by ULK1 is present on T488. T490 carries the phosphothreonine modification. Phosphoserine is present on residues S496, S508, S524, and S527. Over residues 516 to 535 (PSEVSLTSSVTSLDSSPVDV) the composition is skewed to low complexity.

This sequence belongs to the protein kinase superfamily. CAMK Ser/Thr protein kinase family. SNF1 subfamily. In terms of assembly, AMPK is a heterotrimer of an alpha catalytic subunit (PRKAA1 or PRKAA2), a beta (PRKAB1 or PRKAB2) and a gamma non-catalytic subunits (PRKAG1, PRKAG2 or PRKAG3). Interacts with FNIP1 and FNIP2. Mg(2+) is required as a cofactor. Post-translationally, ubiquitinated. In terms of processing, phosphorylated at Thr-183 by STK11/LKB1 in complex with STE20-related adapter-alpha (STRADA) pseudo kinase and CAB39. Also phosphorylated at Thr-183 by CAMKK2; triggered by a rise in intracellular calcium ions, without detectable changes in the AMP/ATP ratio. CAMKK1 can also phosphorylate Thr-183, but at a much lower level. Dephosphorylated by protein phosphatase 2A and 2C (PP2A and PP2C). Phosphorylated by ULK1 and ULK2; leading to negatively regulate AMPK activity and suggesting the existence of a regulatory feedback loop between ULK1, ULK2 and AMPK. There is some ambiguity for some phosphosites: Ser-360/Thr-368 and Ser-486/Thr-488. Dephosphorylated by PPM1A and PPM1B. Glycosylated; O-GlcNAcylated by OGT, promoting the AMP-activated protein kinase (AMPK) activity. In terms of tissue distribution, low expression in kidney, liver, lung, heart and brain.

It is found in the cytoplasm. The protein localises to the nucleus. The enzyme catalyses L-seryl-[protein] + ATP = O-phospho-L-seryl-[protein] + ADP + H(+). The catalysed reaction is L-threonyl-[protein] + ATP = O-phospho-L-threonyl-[protein] + ADP + H(+). It catalyses the reaction L-seryl-[acetyl-CoA carboxylase] + ATP = O-phospho-L-seryl-[acetyl-CoA carboxylase] + ADP + H(+). It carries out the reaction L-seryl-[3-hydroxy-3-methylglutaryl-coenzyme A reductase] + ATP = O-phospho-L-seryl-[3-hydroxy-3-methylglutaryl-coenzyme A reductase] + ADP + H(+). The enzyme catalyses L-seryl-[tau protein] + ATP = O-phospho-L-seryl-[tau protein] + ADP + H(+). The catalysed reaction is L-threonyl-[tau protein] + ATP = O-phospho-L-threonyl-[tau protein] + ADP + H(+). Its activity is regulated as follows. Activated by phosphorylation on Thr-183. Binding of AMP to non-catalytic gamma subunit (PRKAG1, PRKAG2 or PRKAG3) results in allosteric activation, inducing phosphorylation on Thr-183. AMP-binding to gamma subunit also sustains activity by preventing dephosphorylation of Thr-183. ADP also stimulates Thr-183 phosphorylation, without stimulating already phosphorylated AMPK. ATP promotes dephosphorylation of Thr-183, rendering the enzyme inactive. Under physiological conditions AMPK mainly exists in its inactive form in complex with ATP, which is much more abundant than AMP. Selectively inhibited by compound C (6-[4-(2-Piperidin-1-yl-ethoxy)-phenyl)]-3-pyridin-4-yl-pyyrazolo[1,5-a] pyrimidine. Activated by resveratrol, a natural polyphenol present in red wine, and S17834, a synthetic polyphenol. In terms of biological role, catalytic subunit of AMP-activated protein kinase (AMPK), an energy sensor protein kinase that plays a key role in regulating cellular energy metabolism. In response to reduction of intracellular ATP levels, AMPK activates energy-producing pathways and inhibits energy-consuming processes: inhibits protein, carbohydrate and lipid biosynthesis, as well as cell growth and proliferation. AMPK acts via direct phosphorylation of metabolic enzymes, and by longer-term effects via phosphorylation of transcription regulators. Regulates lipid synthesis by phosphorylating and inactivating lipid metabolic enzymes such as ACACA, ACACB, GYS1, HMGCR and LIPE; regulates fatty acid and cholesterol synthesis by phosphorylating acetyl-CoA carboxylase (ACACA and ACACB) and hormone-sensitive lipase (LIPE) enzymes, respectively. Promotes lipolysis of lipid droplets by mediating phosphorylation of isoform 1 of CHKA (CHKalpha2). Regulates insulin-signaling and glycolysis by phosphorylating IRS1, PFKFB2 and PFKFB3. AMPK stimulates glucose uptake in muscle by increasing the translocation of the glucose transporter SLC2A4/GLUT4 to the plasma membrane, possibly by mediating phosphorylation of TBC1D4/AS160. Regulates transcription and chromatin structure by phosphorylating transcription regulators involved in energy metabolism such as CRTC2/TORC2, FOXO3, histone H2B, HDAC5, MEF2C, MLXIPL/ChREBP, EP300, HNF4A, p53/TP53, SREBF1, SREBF2 and PPARGC1A. Acts as a key regulator of glucose homeostasis in liver by phosphorylating CRTC2/TORC2, leading to CRTC2/TORC2 sequestration in the cytoplasm. In response to stress, phosphorylates 'Ser-36' of histone H2B (H2BS36ph), leading to promote transcription. Acts as a key regulator of cell growth and proliferation by phosphorylating FNIP1, TSC2, RPTOR, WDR24 and ATG1/ULK1: in response to nutrient limitation, negatively regulates the mTORC1 complex by phosphorylating RPTOR component of the mTORC1 complex and by phosphorylating and activating TSC2. Also phosphorylates and inhibits GATOR2 subunit WDR24 in response to nutrient limitation, leading to suppress glucose-mediated mTORC1 activation. In response to energetic stress, phosphorylates FNIP1, inactivating the non-canonical mTORC1 signaling, thereby promoting nuclear translocation of TFEB and TFE3, and inducing transcription of lysosomal or autophagy genes. In response to nutrient limitation, promotes autophagy by phosphorylating and activating ATG1/ULK1. In that process, it also activates WDR45/WIPI4. Phosphorylates CASP6, thereby preventing its autoprocessing and subsequent activation. In response to nutrient limitation, phosphorylates transcription factor FOXO3 promoting FOXO3 mitochondrial import. Also acts as a regulator of cellular polarity by remodeling the actin cytoskeleton; probably by indirectly activating myosin. AMPK also acts as a regulator of circadian rhythm by mediating phosphorylation of CRY1, leading to destabilize it. May regulate the Wnt signaling pathway by phosphorylating CTNNB1, leading to stabilize it. Also has tau-protein kinase activity: in response to amyloid beta A4 protein (APP) exposure, activated by CAMKK2, leading to phosphorylation of MAPT/TAU; however the relevance of such data remains unclear in vivo. Also phosphorylates CFTR, EEF2K, KLC1, NOS3 and SLC12A1. Regulates hepatic lipogenesis. Activated via SIRT3, represses sterol regulatory element-binding protein (SREBP) transcriptional activities and ATP-consuming lipogenesis to restore cellular energy balance. Upon stress, regulates mitochondrial fragmentation through phosphorylation of MTFR1L. In Rattus norvegicus (Rat), this protein is 5'-AMP-activated protein kinase catalytic subunit alpha-1 (Prkaa1).